The sequence spans 212 residues: Outer-membrane lipoprotein carrier protein (212 aa).

An N-terminal signal peptide occupies residues 1–25; sequence MRKRILVSACAALAVFAAHMPTALA.

This sequence belongs to the LolA family. As to quaternary structure, monomer.

It localises to the periplasm. In terms of biological role, participates in the translocation of lipoproteins from the inner membrane to the outer membrane. Only forms a complex with a lipoprotein if the residue after the N-terminal Cys is not an aspartate (The Asp acts as a targeting signal to indicate that the lipoprotein should stay in the inner membrane). The protein is Outer-membrane lipoprotein carrier protein of Cupriavidus pinatubonensis (strain JMP 134 / LMG 1197) (Cupriavidus necator (strain JMP 134)).